The chain runs to 338 residues: DNA-directed RNA polymerase subunit alpha (338 aa).

An alpha N-terminal domain (alpha-NTD) region spans residues 1–225 (MLISQRPTIT…ELFGLARELN (225 aa)). The segment at 240 to 338 (TEYIAAYSMP…YIDVEAEDSE (99 aa)) is alpha C-terminal domain (alpha-CTD). Residues 319-338 (LEGYDAETGGYIDVEAEDSE) form a disordered region.

This sequence belongs to the RNA polymerase alpha chain family. In terms of assembly, homodimer. The RNAP catalytic core consists of 2 alpha, 1 beta, 1 beta' and 1 omega subunit. When a sigma factor is associated with the core the holoenzyme is formed, which can initiate transcription.

It carries out the reaction RNA(n) + a ribonucleoside 5'-triphosphate = RNA(n+1) + diphosphate. In terms of biological role, DNA-dependent RNA polymerase catalyzes the transcription of DNA into RNA using the four ribonucleoside triphosphates as substrates. In Corynebacterium glutamicum (strain R), this protein is DNA-directed RNA polymerase subunit alpha.